Here is a 151-residue protein sequence, read N- to C-terminus: Large ribosomal subunit protein bL9 (151 aa).

This sequence belongs to the bacterial ribosomal protein bL9 family.

Functionally, binds to the 23S rRNA. The chain is Large ribosomal subunit protein bL9 from Lactobacillus acidophilus (strain ATCC 700396 / NCK56 / N2 / NCFM).